A 187-amino-acid polypeptide reads, in one-letter code: Protein SCM4 (187 aa).

3 helical membrane passes run 11-31 (IAVS…VISI), 45-65 (VLCT…GAFG), and 80-100 (LLCG…VSLF). The span at 114-134 (DLEKQKDEKLPQHHPEVKDGE) shows a compositional bias: basic and acidic residues. The interval 114 to 135 (DLEKQKDEKLPQHHPEVKDGEA) is disordered. Residues 162 to 182 (MSLHMSIVTGITIFTFGKCIL) traverse the membrane as a helical segment.

It belongs to the ATG33 family.

The protein localises to the membrane. The protein is Protein SCM4 (SCM4) of Saccharomyces cerevisiae (strain ATCC 204508 / S288c) (Baker's yeast).